The primary structure comprises 225 residues: Membrane protein (225 aa).

Residues 1–20 (MSNETNCTLDFEQSVELFKE) lie on the Virion surface side of the membrane. The chain crosses the membrane as a helical span at residues 21–41 (YNLFITAFLLFLTIILQYGYA). Topologically, residues 42–51 (TRSKFIYILK) are intravirion. The chain crosses the membrane as a helical span at residues 52–72 (MIVLWCFWPLNIAVGVISCIY). The Virion surface portion of the chain corresponds to 73-77 (PPNTG). The helical transmembrane segment at 78-98 (GLVAAIILTVFACLSFVGYWI) threads the bilayer. Topologically, residues 99 to 225 (QSIRLFKRCR…VATGGSSLYT (127 aa)) are intravirion.

It belongs to the gammacoronaviruses M protein family. As to quaternary structure, homomultimer. Interacts with envelope E protein in the budding compartment of the host cell, which is located between endoplasmic reticulum and the Golgi complex. Forms a complex with HE and S proteins. Interacts with nucleocapsid N protein. This interaction probably participates in RNA packaging into the virus.

The protein localises to the virion membrane. It is found in the host Golgi apparatus membrane. In terms of biological role, component of the viral envelope that plays a central role in virus morphogenesis and assembly via its interactions with other viral proteins. This chain is Membrane protein, found in Gallus gallus (Chicken).